Consider the following 277-residue polypeptide: 5'-nucleotidase SurE (277 aa).

Asp14, Asp15, Ser46, and Asn104 together coordinate a divalent metal cation.

The protein belongs to the SurE nucleotidase family. The cofactor is a divalent metal cation.

It localises to the cytoplasm. It catalyses the reaction a ribonucleoside 5'-phosphate + H2O = a ribonucleoside + phosphate. Functionally, nucleotidase that shows phosphatase activity on nucleoside 5'-monophosphates. In Picosynechococcus sp. (strain ATCC 27264 / PCC 7002 / PR-6) (Agmenellum quadruplicatum), this protein is 5'-nucleotidase SurE.